Consider the following 461-residue polypeptide: Fumarate hydratase class II (461 aa).

Substrate-binding positions include 98–100 (SGT), 129–132 (HPND), 139–141 (SSN), and threonine 187. Positions 120 to 140 (SKKGGKSPVHPNDHVNKGQSS) are disordered. Histidine 188 functions as the Proton donor/acceptor in the catalytic mechanism. Residue serine 318 is part of the active site. Substrate is bound by residues serine 319 and 324 to 326 (KVN).

The protein belongs to the class-II fumarase/aspartase family. Fumarase subfamily. Homotetramer.

It is found in the cytoplasm. It catalyses the reaction (S)-malate = fumarate + H2O. The protein operates within carbohydrate metabolism; tricarboxylic acid cycle; (S)-malate from fumarate: step 1/1. In terms of biological role, involved in the TCA cycle. Catalyzes the stereospecific interconversion of fumarate to L-malate. The sequence is that of Fumarate hydratase class II from Rickettsia felis (strain ATCC VR-1525 / URRWXCal2) (Rickettsia azadi).